A 755-amino-acid chain; its full sequence is Elongation factor G, mitochondrial (755 aa).

The transit peptide at 1-38 directs the protein to the mitochondrion; that stretch reads MFKRVGLIAGIAGPVAGSSRFSAVSFSKRAFSASSKRC. The region spanning 63–344 is the tr-type G domain; it reads KKLRNIGISA…AIVEYLPNPS (282 aa). GTP-binding positions include 72-79, 143-147, and 197-200; these read AHIDSGKT, DTPGH, and NKMD.

The protein belongs to the TRAFAC class translation factor GTPase superfamily. Classic translation factor GTPase family. EF-G/EF-2 subfamily.

Its subcellular location is the mitochondrion. The protein operates within protein biosynthesis; polypeptide chain elongation. In terms of biological role, mitochondrial GTPase that catalyzes the GTP-dependent ribosomal translocation step during translation elongation. During this step, the ribosome changes from the pre-translocational (PRE) to the post-translocational (POST) state as the newly formed A-site-bound peptidyl-tRNA and P-site-bound deacylated tRNA move to the P and E sites, respectively. Catalyzes the coordinated movement of the two tRNA molecules, the mRNA and conformational changes in the ribosome. The polypeptide is Elongation factor G, mitochondrial (Kluyveromyces lactis (strain ATCC 8585 / CBS 2359 / DSM 70799 / NBRC 1267 / NRRL Y-1140 / WM37) (Yeast)).